Consider the following 352-residue polypeptide: Molybdenum import ATP-binding protein ModC (352 aa).

An ABC transporter domain is found at 1-229 (MLELNFSQTL…SVMHPWLPKE (229 aa)). Position 31–38 (31–38 (GVSGAGKT)) interacts with ATP. The Mop domain maps to 289–352 (QTSIRNVLRA…AQVKSVSITA (64 aa)).

It belongs to the ABC transporter superfamily. Molybdate importer (TC 3.A.1.8) family. In terms of assembly, the complex is composed of two ATP-binding proteins (ModC), two transmembrane proteins (ModB) and a solute-binding protein (ModA).

It localises to the cell inner membrane. It carries out the reaction molybdate(out) + ATP + H2O = molybdate(in) + ADP + phosphate + H(+). In terms of biological role, part of the ABC transporter complex ModABC involved in molybdenum import. Responsible for energy coupling to the transport system. The protein is Molybdenum import ATP-binding protein ModC of Salmonella paratyphi A (strain ATCC 9150 / SARB42).